The chain runs to 275 residues: Large ribosomal subunit protein uL2 (275 aa).

Positions Val223–Lys275 are disordered. Residues Asp229–Glu241 show a composition bias toward basic and acidic residues.

Belongs to the universal ribosomal protein uL2 family. Part of the 50S ribosomal subunit. Forms a bridge to the 30S subunit in the 70S ribosome.

Functionally, one of the primary rRNA binding proteins. Required for association of the 30S and 50S subunits to form the 70S ribosome, for tRNA binding and peptide bond formation. It has been suggested to have peptidyltransferase activity; this is somewhat controversial. Makes several contacts with the 16S rRNA in the 70S ribosome. The chain is Large ribosomal subunit protein uL2 from Laribacter hongkongensis (strain HLHK9).